The sequence spans 208 residues: Large ribosomal subunit protein uL4 (208 aa).

Belongs to the universal ribosomal protein uL4 family. In terms of assembly, part of the 50S ribosomal subunit.

Its function is as follows. One of the primary rRNA binding proteins, this protein initially binds near the 5'-end of the 23S rRNA. It is important during the early stages of 50S assembly. It makes multiple contacts with different domains of the 23S rRNA in the assembled 50S subunit and ribosome. In terms of biological role, forms part of the polypeptide exit tunnel. This chain is Large ribosomal subunit protein uL4, found in Anaplasma marginale (strain Florida).